We begin with the raw amino-acid sequence, 420 residues long: Ammonia monooxygenase beta subunit (420 aa).

A signal peptide spans 1–25; it reads MGIKNLYKRGVMGLYGVAYAVAALA. Cu cation-binding residues include His-38, His-142, and His-144. 2 helical membrane passes run 193-213 and 240-260; these read GIFW…VFTA and ITWV…RYTE.

The soluble ammonia monooxygenase is a nonamer composed of three alpha subunits (AmoA), three beta subunits (AmoB) and three gamma subunits (Cytochrome c1 PetC). Requires Cu(2+) as cofactor.

It localises to the cell membrane. The protein localises to the cytoplasm. It carries out the reaction AH2 + NH4(+) + O2 = hydroxylamine + A + H2O + H(+). With respect to regulation, in vitro, inhibited by acetylene. Its function is as follows. Part of the ammonia monooxygenase complex, which catalyzes the oxidation of ammonia to hydroxylamine, the first reaction in the process of ammonia oxidation to nitrite. This Nitrosomonas europaea (strain ATCC 19718 / CIP 103999 / KCTC 2705 / NBRC 14298) protein is Ammonia monooxygenase beta subunit.